A 393-amino-acid polypeptide reads, in one-letter code: Bifunctional enzyme Fae/Hps (393 aa).

A formaldehyde-activating enzyme region spans residues 1-161; that stretch reads MYLVGEALIG…YEKDRAAHGI (161 aa). His17 acts as the Proton donor in catalysis. Substrate is bound by residues Asp19, Leu48, Lys66, Thr68, and Gln83. The 3-hexulose-6-phosphate synthase stretch occupies residues 162-393; that stretch reads MGFKVQRLWD…IDQFRIMTDF (232 aa).

The protein in the N-terminal section; belongs to the formaldehyde-activating enzyme family. It in the C-terminal section; belongs to the HPS/KGPDC family. HPS subfamily.

The catalysed reaction is 5,6,7,8-tetrahydromethanopterin + formaldehyde = 5,10-methylenetetrahydromethanopterin + H2O. The enzyme catalyses D-ribulose 5-phosphate + formaldehyde = D-arabino-hex-3-ulose 6-phosphate. Its pathway is carbohydrate biosynthesis; D-ribose 5-phosphate biosynthesis. Its function is as follows. Catalyzes the condensation of formaldehyde with tetrahydromethanopterin (H(4)MPT) to 5,10-methylenetetrahydromethanopterin. Functionally, catalyzes the reversible formation of ribulose-5-phosphate and formaldehyde from 3-hexulose-6-phosphate. This Methanoregula boonei (strain DSM 21154 / JCM 14090 / 6A8) protein is Bifunctional enzyme Fae/Hps.